The primary structure comprises 364 residues: tRNA 2-selenouridine synthase (364 aa).

Residues leucine 14–isoleucine 137 form the Rhodanese domain. The active-site S-selanylcysteine intermediate is the cysteine 97.

Belongs to the SelU family. In terms of assembly, monomer.

The catalysed reaction is 5-methylaminomethyl-2-thiouridine(34) in tRNA + selenophosphate + (2E)-geranyl diphosphate + H2O + H(+) = 5-methylaminomethyl-2-selenouridine(34) in tRNA + (2E)-thiogeraniol + phosphate + diphosphate. The enzyme catalyses 5-methylaminomethyl-2-thiouridine(34) in tRNA + (2E)-geranyl diphosphate = 5-methylaminomethyl-S-(2E)-geranyl-thiouridine(34) in tRNA + diphosphate. It catalyses the reaction 5-methylaminomethyl-S-(2E)-geranyl-thiouridine(34) in tRNA + selenophosphate + H(+) = 5-methylaminomethyl-2-(Se-phospho)selenouridine(34) in tRNA + (2E)-thiogeraniol. It carries out the reaction 5-methylaminomethyl-2-(Se-phospho)selenouridine(34) in tRNA + H2O = 5-methylaminomethyl-2-selenouridine(34) in tRNA + phosphate. Functionally, involved in the post-transcriptional modification of the uridine at the wobble position (U34) of tRNA(Lys), tRNA(Glu) and tRNA(Gln). Catalyzes the conversion of 2-thiouridine (S2U-RNA) to 2-selenouridine (Se2U-RNA). Acts in a two-step process involving geranylation of 2-thiouridine (S2U) to S-geranyl-2-thiouridine (geS2U) and subsequent selenation of the latter derivative to 2-selenouridine (Se2U) in the tRNA chain. This is tRNA 2-selenouridine synthase from Escherichia coli (strain SE11).